A 517-amino-acid polypeptide reads, in one-letter code: Tyrosine-protein kinase Fgr (517 aa).

Glycine 2 is lipidated: N-myristoyl glycine. S-palmitoyl cysteine attachment occurs at residues cysteine 3 and cysteine 6. Basic and acidic residues predominate over residues 17–33; it reads VGLEGDFRSQGAEERYY. The disordered stretch occupies residues 17 to 46; the sequence is VGLEGDFRSQGAEERYYPDPTQGRSSSISP. Tyrosine 32 is modified (phosphotyrosine). Serine 50 carries the phosphoserine modification. The SH3 domain occupies 65–126; that stretch reads TGVTIFVALY…PSNYVAPVDS (62 aa). The 98-residue stretch at 132–229 folds into the SH2 domain; the sequence is WYFGKISRKD…GLCYLLTAPC (98 aa). A Phosphotyrosine modification is found at tyrosine 196. Serine 206 bears the Phosphoserine mark. The region spanning 251–504 is the Protein kinase domain; that stretch reads IALDRRLGTG…YLQSFLEDYF (254 aa). ATP contacts are provided by residues 257–265 and lysine 279; that span reads LGTGCFGDV. Aspartate 370 acts as the Proton acceptor in catalysis. Tyrosine 400 is modified (phosphotyrosine; by autocatalysis). At tyrosine 511 the chain carries Phosphotyrosine; by SRC.

Belongs to the protein kinase superfamily. Tyr protein kinase family. SRC subfamily. Interacts with ITGB1, ITGB2, MS4A2/FCER1B and FCGR2. Interacts (via SH2 domain) with SYK (tyrosine phosphorylated). Interacts (via SH2 domain) with FLT3 (tyrosine phosphorylated). Interacts with PTK2/FAK1. Interacts (via SH2 domain) with HCLS1 (tyrosine phosphorylated by SYK). Interacts with SIRPA and PTPNS1. Interacts (not phosphorylated on tyrosine residues) with CBL; FGR tyrosine phosphorylation promotes dissociation. Interacts with CLNK. Post-translationally, ubiquitinated. Becomes ubiquitinated in response to ITGB2 signaling; this does not lead to degradation. In terms of processing, phosphorylated. Autophosphorylated on tyrosine residues. Becomes phosphorylated in response to FCGR2 engagement, cell adhesion and signaling by ITGB2. Prior phosphorylation at Tyr-511 by SRC inhibits ulterior autophosphorylation at Tyr-400. In terms of tissue distribution, detected in brain cortex (at protein level).

Its subcellular location is the cell membrane. It is found in the cell projection. The protein localises to the ruffle membrane. It localises to the cytoplasm. The protein resides in the cytosol. Its subcellular location is the cytoskeleton. It is found in the mitochondrion inner membrane. The protein localises to the mitochondrion intermembrane space. It carries out the reaction L-tyrosyl-[protein] + ATP = O-phospho-L-tyrosyl-[protein] + ADP + H(+). Its activity is regulated as follows. Activated by autophosphorylation. Prior phosphorylation at Tyr-511 by SRC inhibits ulterior autophosphorylation at Tyr-400. Activated by phorbol myristate acetate, phosphatidic acid and poly-Lys. Binding (via SH2 domain) of HCLS1 that is already phosphorylated by SYK strongly increases kinase activity. In terms of biological role, non-receptor tyrosine-protein kinase that transmits signals from cell surface receptors devoid of kinase activity and contributes to the regulation of immune responses, including neutrophil, monocyte, macrophage and mast cell functions, cytoskeleton remodeling in response to extracellular stimuli, phagocytosis, cell adhesion and migration. Promotes mast cell degranulation, release of inflammatory cytokines and IgE-mediated anaphylaxis. Acts downstream of receptors that bind the Fc region of immunoglobulins, such as MS4A2/FCER1B, FCER1G and FCGR2. Acts downstream of ITGB1 and ITGB2, and regulates actin cytoskeleton reorganization, cell spreading and adhesion. Depending on the context, activates or inhibits cellular responses. Functions as a negative regulator of ITGB2 signaling, phagocytosis and SYK activity in monocytes. Required for normal ITGB1 and ITGB2 signaling, normal cell spreading and adhesion in neutrophils and macrophages. Functions as a positive regulator of cell migration and regulates cytoskeleton reorganization via RAC1 activation. Phosphorylates SYK (in vitro) and promotes SYK-dependent activation of AKT1 and MAP kinase signaling. Phosphorylates PLD2 in antigen-stimulated mast cells, leading to PLD2 activation and the production of the signaling molecules lysophosphatidic acid and diacylglycerol. Promotes activation of PIK3R1. Phosphorylates FASLG, and thereby regulates its ubiquitination and subsequent internalization. Phosphorylates ABL1. Promotes phosphorylation of CBL, CTTN, PIK3R1, PTK2/FAK1, PTK2B/PYK2 and VAV2. Phosphorylates HCLS1 that has already been phosphorylated by SYK, but not unphosphorylated HCLS1. Together with CLNK, it acts as a negative regulator of natural killer cell-activating receptors and inhibits interferon-gamma production. This is Tyrosine-protein kinase Fgr (Fgr) from Rattus norvegicus (Rat).